Consider the following 637-residue polypeptide: Early transcription factor 70 kDa subunit (637 aa).

Residues Arg32 to Glu185 form the Helicase ATP-binding domain. ATP is bound at residue His45–Thr52. The short motif at Asp135–His138 is the DEXH box element. A Helicase C-terminal domain is found at Lys327–Leu507.

It belongs to the helicase family. VETF subfamily. As to quaternary structure, heterodimer of a 70 kDa and a 82 kDa subunit. Part of the early transcription complex composed of ETF, RAP94/OPG109, and the DNA-directed RNA polymerase.

It is found in the virion. Its function is as follows. Acts with RNA polymerase to initiate transcription from early gene promoters. Is recruited by the RPO-associated protein of 94 kDa RAP94/OPG109 to form the early transcription complex, which also contains the core RNA polymerase. ETF heterodimer binds to early gene promoters. This is Early transcription factor 70 kDa subunit (OPG118) from Homo sapiens (Human).